The chain runs to 293 residues: Ethanolamine ammonia-lyase small subunit (293 aa).

Adenosylcob(III)alamin is bound by residues Val207 and Glu228.

Belongs to the EutC family. As to quaternary structure, the basic unit is a heterodimer which dimerizes to form tetramers. The heterotetramers trimerize; 6 large subunits form a core ring with 6 small subunits projecting outwards. It depends on adenosylcob(III)alamin as a cofactor.

The protein resides in the bacterial microcompartment. It catalyses the reaction ethanolamine = acetaldehyde + NH4(+). Its pathway is amine and polyamine degradation; ethanolamine degradation. Functionally, catalyzes the deamination of various vicinal amino-alcohols to oxo compounds. Allows this organism to utilize ethanolamine as the sole source of nitrogen and carbon in the presence of external vitamin B12. The protein is Ethanolamine ammonia-lyase small subunit of Listeria monocytogenes serotype 4a (strain HCC23).